Consider the following 420-residue polypeptide: Shaggy-related protein kinase delta (420 aa).

Residues 1 to 61 (MESHLGNGVG…DIIDGVGAEP (61 aa)) form a disordered region. A compositionally biased stretch (polar residues) spans 10 to 26 (GSSRSAKNTKNTSSSVD). Basic and acidic residues predominate over residues 28–41 (LSRDMLEMKIRDKT). The segment covering 42-53 (EADEERDSEPDI) has biased composition (acidic residues). Residues 82-366 (YIAEHVVGTG…AVEACIHPFF (285 aa)) enclose the Protein kinase domain. ATP-binding positions include 88–96 (VGTGSFGMV) and Lys-111. Asp-207 serves as the catalytic Proton acceptor. A Phosphotyrosine modification is found at Tyr-242.

It belongs to the protein kinase superfamily. CMGC Ser/Thr protein kinase family. GSK-3 subfamily. In terms of processing, autophosphorylated mainly on threonine and serine residues.

The catalysed reaction is L-seryl-[protein] + ATP = O-phospho-L-seryl-[protein] + ADP + H(+). It carries out the reaction L-threonyl-[protein] + ATP = O-phospho-L-threonyl-[protein] + ADP + H(+). In terms of biological role, may mediate extracellular signals to regulate transcription in differentiating cells. The sequence is that of Shaggy-related protein kinase delta (ASK4) from Arabidopsis thaliana (Mouse-ear cress).